Here is a 280-residue protein sequence, read N- to C-terminus: Energy-coupling factor transporter ATP-binding protein EcfA2 (280 aa).

An ABC transporter domain is found at 3-245 (INLQNVSYTY…VSLLEKKQLG (243 aa)). 40-47 (GHTGSGKS) serves as a coordination point for ATP.

The protein belongs to the ABC transporter superfamily. Energy-coupling factor EcfA family. In terms of assembly, forms a stable energy-coupling factor (ECF) transporter complex composed of 2 membrane-embedded substrate-binding proteins (S component), 2 ATP-binding proteins (A component) and 2 transmembrane proteins (T component).

Its subcellular location is the cell membrane. ATP-binding (A) component of a common energy-coupling factor (ECF) ABC-transporter complex. Unlike classic ABC transporters this ECF transporter provides the energy necessary to transport a number of different substrates. This is Energy-coupling factor transporter ATP-binding protein EcfA2 from Streptococcus pyogenes serotype M28 (strain MGAS6180).